The chain runs to 81 residues: MKTLLLTLVVVTIVCLDLGYTLKCNKLIPIASKTCPAGKNLCYKMFMMSDLTIPVKRGCIDVCPKNSLLVKYVCCNTDRCN.

A signal peptide spans 1–21; that stretch reads MKTLLLTLVVVTIVCLDLGYT. Disulfide bonds link cysteine 24–cysteine 42, cysteine 35–cysteine 59, cysteine 63–cysteine 74, and cysteine 75–cysteine 80.

The protein belongs to the three-finger toxin family. Short-chain subfamily. Type IA cytotoxin sub-subfamily. Monomer in solution; Homodimer and oligomer in the presence of negatively charged lipids forming a pore with a size ranging between 20 and 30 Angstroms. Expressed by the venom gland.

The protein localises to the secreted. The protein resides in the target cell membrane. In terms of biological role, basic protein that binds to cell membrane and depolarizes cardiomyocytes. It also shows lytic activities on many other cells, including red blood cells. Interaction with sulfatides in the cell membrane induces pore formation and cell internalization and is responsible for cytotoxicity in cardiomyocytes. It targets the mitochondrial membrane and induces mitochondrial swelling and fragmentation. It binds to the integrin alpha-V/beta-3 (ITGAV/ITGB3) with a moderate affinity and inhibits protein kinases C. It also binds with high affinity to heparin. It also causes skeletal muscle necrosis after intramuscular injection into mice. The sequence is that of Cytotoxin 1 from Naja atra (Chinese cobra).